Here is a 139-residue protein sequence, read N- to C-terminus: UPF0251 protein Csac_0224 (139 aa).

This sequence belongs to the UPF0251 family.

The chain is UPF0251 protein Csac_0224 from Caldicellulosiruptor saccharolyticus (strain ATCC 43494 / DSM 8903 / Tp8T 6331).